Consider the following 341-residue polypeptide: Phosphoribosylformylglycinamidine cyclo-ligase (341 aa).

This sequence belongs to the AIR synthase family.

It localises to the cytoplasm. The enzyme catalyses 2-formamido-N(1)-(5-O-phospho-beta-D-ribosyl)acetamidine + ATP = 5-amino-1-(5-phospho-beta-D-ribosyl)imidazole + ADP + phosphate + H(+). The protein operates within purine metabolism; IMP biosynthesis via de novo pathway; 5-amino-1-(5-phospho-D-ribosyl)imidazole from N(2)-formyl-N(1)-(5-phospho-D-ribosyl)glycinamide: step 2/2. This chain is Phosphoribosylformylglycinamidine cyclo-ligase, found in Lachnospira eligens (strain ATCC 27750 / DSM 3376 / VPI C15-48 / C15-B4) (Eubacterium eligens).